Consider the following 367-residue polypeptide: Phosphoribosylaminoimidazole-succinocarboxamide synthase (367 aa).

The protein belongs to the SAICAR synthetase family.

The catalysed reaction is 5-amino-1-(5-phospho-D-ribosyl)imidazole-4-carboxylate + L-aspartate + ATP = (2S)-2-[5-amino-1-(5-phospho-beta-D-ribosyl)imidazole-4-carboxamido]succinate + ADP + phosphate + 2 H(+). Its pathway is purine metabolism; IMP biosynthesis via de novo pathway; 5-amino-1-(5-phospho-D-ribosyl)imidazole-4-carboxamide from 5-amino-1-(5-phospho-D-ribosyl)imidazole-4-carboxylate: step 1/2. The polypeptide is Phosphoribosylaminoimidazole-succinocarboxamide synthase (Aeromonas salmonicida (strain A449)).